Reading from the N-terminus, the 20-residue chain is Protease inhibitor (20 aa).

As to quaternary structure, monomer. Post-translationally, glycosylated. As to expression, stored in epidermis and secreted into the hemolymph and cuticle. Not detected in the interior of the epidermis, fat body cells or columnar or goblet cells of the midgut epithelium (at protein level).

Functionally, inhibits trypsin and chymotrypsin. This is Protease inhibitor from Antheraea mylitta (Tasar silkworm).